The sequence spans 84 residues: MARENKKELIGRVVSDKMSKTIVVEIVQRKMHPIYHKYLKVSKKVKAHDEKEVSKVGDKVKIIEVRPISKDKRWSLVEVLEKLK.

This sequence belongs to the universal ribosomal protein uS17 family. In terms of assembly, part of the 30S ribosomal subunit.

Functionally, one of the primary rRNA binding proteins, it binds specifically to the 5'-end of 16S ribosomal RNA. This is Small ribosomal subunit protein uS17 from Borreliella afzelii (strain PKo) (Borrelia afzelii).